Reading from the N-terminus, the 347-residue chain is Inositol 2-dehydrogenase (347 aa).

It belongs to the Gfo/Idh/MocA family. Homotetramer.

It carries out the reaction myo-inositol + NAD(+) = scyllo-inosose + NADH + H(+). Its function is as follows. Involved in the oxidation of myo-inositol (MI) to 2-keto-myo-inositol (2KMI or 2-inosose). The polypeptide is Inositol 2-dehydrogenase (Rubrobacter xylanophilus (strain DSM 9941 / JCM 11954 / NBRC 16129 / PRD-1)).